The chain runs to 228 residues: Ephrin-A5b (228 aa).

The first 20 residues, 1 to 20 (MLQAEMIVFVGVILWMCVFS), serve as a signal peptide directing secretion. The Ephrin RBD domain maps to 29–162 (ADRYAVFWNR…KLKVFVRPPN (134 aa)). Asn-37 carries N-linked (GlcNAc...) asparagine glycosylation. 2 cysteine pairs are disulfide-bonded: Cys-62-Cys-102 and Cys-90-Cys-151. Positions 184–198 (LEPRDDTSHEAEPSR) are enriched in basic and acidic residues. A disordered region spans residues 184–205 (LEPRDDTSHEAEPSRSDVSTSG). A lipid anchor (GPI-anchor amidated serine) is attached at Ser-204. Positions 205–228 (GLRHQTSRPLLALLLLCISLYLLL) are cleaved as a propeptide — removed in mature form.

This sequence belongs to the ephrin family. As to expression, widespread expression in the embryo.

It is found in the cell membrane. Its function is as follows. Cell surface GPI-bound ligand for Eph receptors, a family of receptor tyrosine kinases which are crucial for migration, repulsion and adhesion during neuronal, vascular and epithelial development. Binds promiscuously Eph receptors residing on adjacent cells, leading to contact-dependent bidirectional signaling into neighboring cells. Induces compartmentalized signaling within a caveolae-like membrane microdomain when bound to the extracellular domain of its cognate receptor. This signaling event requires the activity of the Fyn tyrosine kinase. Activates the epha3 receptor to regulate cell-cell adhesion and cytoskeletal organization. With the receptor epha2 may regulate lens fiber cells shape and interactions and be important for lens transparency maintenance. May function actively to stimulate axon fasciculation. Controls axon growth and may be involved in the creation of the retino-tectal map. The chain is Ephrin-A5b (efna5b) from Danio rerio (Zebrafish).